The chain runs to 475 residues: Ribulose bisphosphate carboxylase large chain (475 aa).

Positions 1-2 (MS) are excised as a propeptide. Pro-3 is modified (N-acetylproline). Residue Lys-14 is modified to N6,N6,N6-trimethyllysine. The substrate site is built by Asn-123 and Thr-173. The Proton acceptor role is filled by Lys-175. Lys-177 lines the substrate pocket. Residues Lys-201, Asp-203, and Glu-204 each coordinate Mg(2+). At Lys-201 the chain carries N6-carboxylysine. His-294 (proton acceptor) is an active-site residue. Substrate-binding residues include Arg-295, His-327, and Ser-379.

It belongs to the RuBisCO large chain family. Type I subfamily. As to quaternary structure, heterohexadecamer of 8 large chains and 8 small chains; disulfide-linked. The disulfide link is formed within the large subunit homodimers. Mg(2+) is required as a cofactor. The disulfide bond which can form in the large chain dimeric partners within the hexadecamer appears to be associated with oxidative stress and protein turnover.

The protein localises to the plastid. The protein resides in the chloroplast. It carries out the reaction 2 (2R)-3-phosphoglycerate + 2 H(+) = D-ribulose 1,5-bisphosphate + CO2 + H2O. The catalysed reaction is D-ribulose 1,5-bisphosphate + O2 = 2-phosphoglycolate + (2R)-3-phosphoglycerate + 2 H(+). Functionally, ruBisCO catalyzes two reactions: the carboxylation of D-ribulose 1,5-bisphosphate, the primary event in carbon dioxide fixation, as well as the oxidative fragmentation of the pentose substrate in the photorespiration process. Both reactions occur simultaneously and in competition at the same active site. The polypeptide is Ribulose bisphosphate carboxylase large chain (Anthoceros angustus (Hornwort)).